The following is a 354-amino-acid chain: UDP-N-acetylglucosamine--N-acetylmuramyl-(pentapeptide) pyrophosphoryl-undecaprenol N-acetylglucosamine transferase (354 aa).

UDP-N-acetyl-alpha-D-glucosamine is bound by residues 14–16 (TGG), Asn126, Arg162, Ser190, Ile243, 262–267 (ALTVSE), and Gln287.

This sequence belongs to the glycosyltransferase 28 family. MurG subfamily.

The protein resides in the cell inner membrane. The catalysed reaction is di-trans,octa-cis-undecaprenyl diphospho-N-acetyl-alpha-D-muramoyl-L-alanyl-D-glutamyl-meso-2,6-diaminopimeloyl-D-alanyl-D-alanine + UDP-N-acetyl-alpha-D-glucosamine = di-trans,octa-cis-undecaprenyl diphospho-[N-acetyl-alpha-D-glucosaminyl-(1-&gt;4)]-N-acetyl-alpha-D-muramoyl-L-alanyl-D-glutamyl-meso-2,6-diaminopimeloyl-D-alanyl-D-alanine + UDP + H(+). It participates in cell wall biogenesis; peptidoglycan biosynthesis. Functionally, cell wall formation. Catalyzes the transfer of a GlcNAc subunit on undecaprenyl-pyrophosphoryl-MurNAc-pentapeptide (lipid intermediate I) to form undecaprenyl-pyrophosphoryl-MurNAc-(pentapeptide)GlcNAc (lipid intermediate II). This Photobacterium profundum (strain SS9) protein is UDP-N-acetylglucosamine--N-acetylmuramyl-(pentapeptide) pyrophosphoryl-undecaprenol N-acetylglucosamine transferase.